A 210-amino-acid polypeptide reads, in one-letter code: Thymidylate kinase (210 aa).

Residue 11–18 coordinates ATP; that stretch reads GLEGAGKS.

This sequence belongs to the thymidylate kinase family.

The enzyme catalyses dTMP + ATP = dTDP + ADP. In terms of biological role, phosphorylation of dTMP to form dTDP in both de novo and salvage pathways of dTTP synthesis. In Histophilus somni (strain 129Pt) (Haemophilus somnus), this protein is Thymidylate kinase.